We begin with the raw amino-acid sequence, 462 residues long: Glycoprotein endo-alpha-1,2-mannosidase (462 aa).

At 1-8 (MAKFRRRT) the chain is on the cytoplasmic side. Residues 9–29 (CIILALFILFIFSLMMGLKML) traverse the membrane as a helical; Signal-anchor for type II membrane protein segment. The Lumenal portion of the chain corresponds to 30–462 (RPNTATFGAP…YALDRQLPVS (433 aa)). The catalytic stretch occupies residues 60-462 (DFQKSDRINS…YALDRQLPVS (403 aa)).

Belongs to the glycosyl hydrolase 99 family. Post-translationally, undergoes proteolytic cleavage in the C-terminal region. Highly expressed in the liver and kidney. Expressed at lower levels in muscle, pancreas, heart, placenta, lung and brain.

It is found in the golgi apparatus membrane. The catalysed reaction is N-{alpha-Glc-(1-&gt;3)-alpha-Man-(1-&gt;2)-alpha-Man-(1-&gt;2)-alpha-Man-(1-&gt;3)-[alpha-Man-(1-&gt;2)-alpha-Man-(1-&gt;3)-[alpha-Man-(1-&gt;2)-alpha-Man-(1-&gt;6)]-alpha-Man-(1-&gt;6)]-beta-Man-(1-&gt;4)-beta-GlcNAc-(1-&gt;4)-beta-GlcNAc}-L-asparaginyl-[protein] + H2O = alpha-D-glucosyl-(1-&gt;3)-D-mannopyranose + N(4)-{alpha-D-Man-(1-&gt;2)-alpha-D-Man-(1-&gt;3)-[alpha-D-Man-(1-&gt;2)-alpha-D-Man-(1-&gt;3)-[alpha-D-Man-(1-&gt;2)-alpha-D-Man-(1-&gt;6)]-alpha-D-Man-(1-&gt;6)]-beta-D-Man-(1-&gt;4)-beta-D-GlaNAc-(1-&gt;4)-beta-D-GlcNAc}-L-asparaginyl-[protein] (N-glucan mannose isomer 8A1,2,3B1,2). The protein is Glycoprotein endo-alpha-1,2-mannosidase (MANEA) of Homo sapiens (Human).